The following is a 326-amino-acid chain: MSGFGTQIDVKALGKVAVLLGGRSAEREVSLMSGTGVLKALLSHGVDAHAFDPAERDLGELKKEGFDRCFIALHGRYGEDGTVQGALELLGIPYTGPGVMASSIAMDKIMTKRIWRFEGLPTPDWRLVASAGETRAALQALGAPMIVKPSREGSTIGLTKVWTAEECDQAYVLASRYDPEVLCEEFIEGDETTCPVLGTGEGAHALPVIRIVAPEGNYDYQNKYFTDDTKYHCPSGLPAEEEAEIRRIVVRAFRTLGCRGWSRADIMIRASDRKPFLLEINTSPGMTGHSLVPMSARAIGVSYENLCLGILASAALDAAQPEQEHA.

Residues 112 to 312 form the ATP-grasp domain; it reads KRIWRFEGLP…YENLCLGILA (201 aa). 138 to 193 contacts ATP; that stretch reads LQALGAPMIVKPSREGSTIGLTKVWTAEECDQAYVLASRYDPEVLCEEFIEGDETT. Positions 265, 279, and 281 each coordinate Mg(2+).

This sequence belongs to the D-alanine--D-alanine ligase family. Mg(2+) is required as a cofactor. It depends on Mn(2+) as a cofactor.

It localises to the cytoplasm. It carries out the reaction 2 D-alanine + ATP = D-alanyl-D-alanine + ADP + phosphate + H(+). Its pathway is cell wall biogenesis; peptidoglycan biosynthesis. Cell wall formation. This chain is D-alanine--D-alanine ligase, found in Delftia acidovorans (strain DSM 14801 / SPH-1).